The chain runs to 101 residues: Large ribosomal subunit protein uL23 (101 aa).

The protein belongs to the universal ribosomal protein uL23 family. Part of the 50S ribosomal subunit. Contacts protein L29, and trigger factor when it is bound to the ribosome.

In terms of biological role, one of the early assembly proteins it binds 23S rRNA. One of the proteins that surrounds the polypeptide exit tunnel on the outside of the ribosome. Forms the main docking site for trigger factor binding to the ribosome. The polypeptide is Large ribosomal subunit protein uL23 (Corynebacterium efficiens (strain DSM 44549 / YS-314 / AJ 12310 / JCM 11189 / NBRC 100395)).